The following is a 514-amino-acid chain: Ras-GEF domain-containing family member 1B-A (514 aa).

The N-terminal Ras-GEF domain occupies 76-206 (HDNNLISGSL…MTQTLIRKLT (131 aa)). Positions 246–494 (DPFTLAQQLT…YLASYESEGP (249 aa)) constitute a Ras-GEF domain.

In terms of tissue distribution, detected in oocytes, and in embryos at 4 to 120 hours post-fertilization (hpf). Detected along marginal blastomeres at early epiboly stage and throughout the margin at the onset of gastrulation. At 60% epiboly, strongest expression is found in the dorsal shield region and is restricted to the epiblast. Detected in the anterior border of the presomitic mesoderm at the end of epiboly. Detected in adaxial cells, in the somites and in the nervous system during somitogenesis. Detected in diencephalon and hindbrain and in cells surrounding the notochord, including adaxial cells and ventral mesendoderm, in 15-somite stage embryos. At 48 hpf, detected mainly in the brain.

Functionally, guanine nucleotide exchange factor (GEF) for Ras family proteins (in vitro). In Danio rerio (Zebrafish), this protein is Ras-GEF domain-containing family member 1B-A (rasgef1ba).